A 393-amino-acid polypeptide reads, in one-letter code: uncharacterized protein (393 aa).

Positions 2-266 (AMIGLVGKPN…AEKAGIIKRK (265 aa)) constitute an OBG-type G domain. GTP is bound by residues 8–15 (GKPNVGKS) and 78–82 (DVAGL). The 77-residue stretch at 314–390 (DMIVVYPVED…KHNDIIKIVS (77 aa)) folds into the TGS domain.

Belongs to the TRAFAC class OBG-HflX-like GTPase superfamily. OBG GTPase family.

This is an uncharacterized protein from Methanocaldococcus jannaschii (strain ATCC 43067 / DSM 2661 / JAL-1 / JCM 10045 / NBRC 100440) (Methanococcus jannaschii).